Consider the following 496-residue polypeptide: Lysine--tRNA ligase (496 aa).

The Mg(2+) site is built by glutamate 409 and glutamate 416.

Belongs to the class-II aminoacyl-tRNA synthetase family. Homodimer. Requires Mg(2+) as cofactor.

It is found in the cytoplasm. It catalyses the reaction tRNA(Lys) + L-lysine + ATP = L-lysyl-tRNA(Lys) + AMP + diphosphate. In Streptococcus agalactiae serotype III (strain NEM316), this protein is Lysine--tRNA ligase.